The sequence spans 181 residues: Translation initiation factor IF-3, chloroplastic (181 aa).

Belongs to the IF-3 family. Monomer.

The protein localises to the plastid. The protein resides in the chloroplast. Functionally, IF-3 binds to the 30S ribosomal subunit and shifts the equilibrium between 70S ribosomes and their 50S and 30S subunits in favor of the free subunits, thus enhancing the availability of 30S subunits on which protein synthesis initiation begins. This chain is Translation initiation factor IF-3, chloroplastic, found in Gracilaria tenuistipitata var. liui (Red alga).